The sequence spans 512 residues: Lysine--tRNA ligase (512 aa).

Mg(2+)-binding residues include Glu408 and Glu415.

Belongs to the class-II aminoacyl-tRNA synthetase family. As to quaternary structure, homodimer. Mg(2+) serves as cofactor.

The protein localises to the cytoplasm. It carries out the reaction tRNA(Lys) + L-lysine + ATP = L-lysyl-tRNA(Lys) + AMP + diphosphate. This chain is Lysine--tRNA ligase, found in Prochlorococcus marinus (strain MIT 9215).